Here is a 299-residue protein sequence, read N- to C-terminus: Oxygen-dependent coproporphyrinogen-III oxidase (299 aa).

Ser-92 serves as a coordination point for substrate. The Mn(2+) site is built by His-96 and His-106. Residue His-106 is the Proton donor of the active site. A substrate-binding site is contributed by 108–110; the sequence is NVR. Residues His-145 and His-175 each contribute to the Mn(2+) site. Residues 240 to 275 form an important for dimerization region; sequence YVEFNLVWDRGTLFGLQTGGRTESILMSMPPLVRWE. Position 258–260 (258–260) interacts with substrate; it reads GGR.

The protein belongs to the aerobic coproporphyrinogen-III oxidase family. Homodimer. Requires Mn(2+) as cofactor.

It is found in the cytoplasm. It carries out the reaction coproporphyrinogen III + O2 + 2 H(+) = protoporphyrinogen IX + 2 CO2 + 2 H2O. Its pathway is porphyrin-containing compound metabolism; protoporphyrin-IX biosynthesis; protoporphyrinogen-IX from coproporphyrinogen-III (O2 route): step 1/1. In terms of biological role, involved in the heme biosynthesis. Catalyzes the aerobic oxidative decarboxylation of propionate groups of rings A and B of coproporphyrinogen-III to yield the vinyl groups in protoporphyrinogen-IX. The chain is Oxygen-dependent coproporphyrinogen-III oxidase from Escherichia fergusonii (strain ATCC 35469 / DSM 13698 / CCUG 18766 / IAM 14443 / JCM 21226 / LMG 7866 / NBRC 102419 / NCTC 12128 / CDC 0568-73).